Reading from the N-terminus, the 387-residue chain is Early growth response protein 3 (387 aa).

The tract at residues 241-283 (PGFGSLPQPPLTLKPIRPRKYPNRPSKTPLHERPHACPAEGCD) is disordered. Basic and acidic residues predominate over residues 269 to 283 (PLHERPHACPAEGCD). 3 C2H2-type zinc fingers span residues 275-299 (HACP…LRIH), 305-327 (FQCR…IRTH), and 333-355 (FACE…AKIH). The interval 348–387 (RKRHAKIHLKQKEKKSEKGGAPSASSAPTVSLAPVVTTCA) is disordered. Positions 350–360 (RHAKIHLKQKE) are enriched in basic residues.

It belongs to the EGR C2H2-type zinc-finger protein family.

The protein localises to the nucleus. In terms of biological role, probable transcription factor involved in muscle spindle development. The chain is Early growth response protein 3 (Egr3) from Mus musculus (Mouse).